Here is a 200-residue protein sequence, read N- to C-terminus: TATA-box-binding protein (200 aa).

Tandem repeats lie at residues 25–101 (LQNI…ARII) and 115–192 (IQNI…YPVL).

Belongs to the TBP family. As to quaternary structure, belongs to the TFIID complex together with the TBP-associated factors (TAFs). Binds DNA as monomer.

It localises to the nucleus. General transcription factor that functions at the core of the DNA-binding multiprotein factor TFIID. Binding of TFIID to the TATA box is the initial transcriptional step of the pre-initiation complex (PIC), playing a role in the activation of eukaryotic genes transcribed by RNA polymerase II. This chain is TATA-box-binding protein, found in Mesembryanthemum crystallinum (Common ice plant).